The chain runs to 373 residues: Dynein regulatory complex protein 9 (373 aa).

The stretch at 145-200 (EQAMKETIEREKNTTAAVRQLRNDLREEKLDHEEKMKEKKKGLSTLKEQLKALKMD) forms a coiled coil. In terms of domain architecture, IQ spans 336–365 (RAQAAVIIQAWWRGHKVRMVMSGGGKKGAK).

Belongs to the DRC9 family. In terms of assembly, component of the nexin-dynein regulatory complex (N-DRC).

The protein resides in the cytoplasm. The protein localises to the cytoskeleton. Its subcellular location is the flagellum axoneme. Its function is as follows. Component of the nexin-dynein regulatory complex (N-DRC), a key regulator of ciliary/flagellar motility which maintains the alignment and integrity of the distal axoneme and regulates microtubule sliding in motile axonemes. In Chlamydomonas reinhardtii (Chlamydomonas smithii), this protein is Dynein regulatory complex protein 9.